A 685-amino-acid chain; its full sequence is N(6)-adenosine-methyltransferase MT-A70-like (685 aa).

S-adenosyl-L-methionine contacts are provided by residues 464 to 465 (DI) and Asp-482. Residues 552–565 (RIIRTGRTGHWLNH) form a positively charged region required for RNA-binding region. S-adenosyl-L-methionine-binding positions include Lys-599, 622 to 625 (RMHN), and 635 to 636 (NQ). Positions 657–685 (EIDVQPPSPPRASAMETDNEPMAIDSITA) are disordered. Phosphoserine is present on Ser-664.

This sequence belongs to the MT-A70-like family. Interacts with FIP37. Interacts with MTB. Associates with MTB, FIP37, VIR and HAKAI to form the m6A writer complex which is essential for adenosine methylation at specific mRNA sequences.

Its subcellular location is the nucleus. The catalysed reaction is an adenosine in mRNA + S-adenosyl-L-methionine = an N(6)-methyladenosine in mRNA + S-adenosyl-L-homocysteine + H(+). Its function is as follows. Catalytic subunit of the N6-methyltransferase complex, a multiprotein complex that mediates N6-methyladenosine (m6A) methylation at the 5'-[AG]GAC-3' consensus sites of some mRNAs. Associates with MTB, FIP37, VIR and HAKAI to form the m6A writer complex which is essential for adenosine methylation at specific mRNA sequences. N6-methyladenosine (m6A) plays a role in mRNA stability, processing, translation efficiency and editing. The chain is N(6)-adenosine-methyltransferase MT-A70-like from Arabidopsis thaliana (Mouse-ear cress).